The sequence spans 320 residues: o-succinylbenzoate synthase (320 aa).

The Proton donor role is filled by K133. Mg(2+)-binding residues include D161, E190, and D213. The Proton acceptor role is filled by K235.

The protein belongs to the mandelate racemase/muconate lactonizing enzyme family. MenC type 1 subfamily. Requires a divalent metal cation as cofactor.

The enzyme catalyses (1R,6R)-6-hydroxy-2-succinyl-cyclohexa-2,4-diene-1-carboxylate = 2-succinylbenzoate + H2O. It functions in the pathway quinol/quinone metabolism; 1,4-dihydroxy-2-naphthoate biosynthesis; 1,4-dihydroxy-2-naphthoate from chorismate: step 4/7. It participates in quinol/quinone metabolism; menaquinone biosynthesis. In terms of biological role, converts 2-succinyl-6-hydroxy-2,4-cyclohexadiene-1-carboxylate (SHCHC) to 2-succinylbenzoate (OSB). This chain is o-succinylbenzoate synthase, found in Salmonella enteritidis PT4 (strain P125109).